The chain runs to 215 residues: MIYDWVFAVHEHVAFTAFDTETTGLKAEEDRIIEIGAVTFDRKGIIARFSTLIFPDRAIPPDVSKINHITDDMLVNKPRFCEIVSDFSRFIKGTVLVAHNANFDVEFLNAELSLCKKQPLSHKVVDTYAMAQAVFPGLGRHQYRLQNLALQFGLTVHAAHRAEDDARVCMELFTTMIAHHAKQNGHCVNHAQSPTIKKLIQEIQASSTDCSQELF.

Residues Asp-19 and Glu-21 each coordinate a divalent metal cation. Substrate is bound by residues Asp-19, Glu-21, Asp-62, and Asn-67. Residue His-160 is the Proton acceptor of the active site. An a divalent metal cation-binding site is contributed by Asp-165. Asp-165 contributes to the substrate binding site.

As to quaternary structure, DNA polymerase III contains a core (composed of alpha, epsilon and theta chains) that associates with a tau subunit. This core dimerizes to form the POLIII' complex. PolIII' associates with the gamma complex (composed of gamma, delta, delta', psi and chi chains) and with the beta chain to form the complete DNA polymerase III complex. Mg(2+) is required as a cofactor. It depends on Mn(2+) as a cofactor.

The catalysed reaction is DNA(n) + a 2'-deoxyribonucleoside 5'-triphosphate = DNA(n+1) + diphosphate. Functionally, DNA polymerase III is a complex, multichain enzyme responsible for most of the replicative synthesis in bacteria. The epsilon subunit contain the editing function and is a proofreading 3'-5' exonuclease. The protein is DNA polymerase III subunit epsilon (dnaQ) of Treponema pallidum (strain Nichols).